Reading from the N-terminus, the 277-residue chain is Hydroxypyruvate/pyruvate aldolase (277 aa).

The active-site Proton acceptor is H54. 2 residues coordinate a divalent metal cation: E158 and D184.

It belongs to the HpcH/HpaI aldolase family. The cofactor is a divalent metal cation.

It carries out the reaction D-glyceraldehyde + 3-hydroxypyruvate = (3R,4S,5R)-3,4,5,6-tetrahydroxy-2-oxohexanoate. It catalyses the reaction D-glyceraldehyde + 3-hydroxypyruvate = 2-dehydro-D-gluconate. The catalysed reaction is D-glyceraldehyde + 3-hydroxypyruvate = 2-dehydro-D-galactonate. The enzyme catalyses D-glyceraldehyde + pyruvate = 2-dehydro-3-deoxy-L-galactonate. Functionally, aldolase which can catalyze in vitro the aldolisation reaction between hydroxypyruvate (HPA) or pyruvate (PA) and D-glyceraldehyde (D-GA). The condensation of hydroxypyruvate and D-glyceraldehyde produces (3R,4S,5R)-3,4,5,6-tetrahydroxy-2-oxohexanoate as the major product, 2-dehydro-D-gluconate and 2-dehydro-D-galactonate. The condensation of pyruvate and D-glyceraldehyde produces 2-dehydro-3-deoxy-L-galactonate as the major product. The sequence is that of Hydroxypyruvate/pyruvate aldolase from Deinococcus radiodurans (strain ATCC 13939 / DSM 20539 / JCM 16871 / CCUG 27074 / LMG 4051 / NBRC 15346 / NCIMB 9279 / VKM B-1422 / R1).